A 270-amino-acid polypeptide reads, in one-letter code: Ribosomal RNA small subunit methyltransferase A (270 aa).

The S-adenosyl-L-methionine site is built by H11, L13, G38, E59, D84, and N109.

The protein belongs to the class I-like SAM-binding methyltransferase superfamily. rRNA adenine N(6)-methyltransferase family. RsmA subfamily.

The protein localises to the cytoplasm. The catalysed reaction is adenosine(1518)/adenosine(1519) in 16S rRNA + 4 S-adenosyl-L-methionine = N(6)-dimethyladenosine(1518)/N(6)-dimethyladenosine(1519) in 16S rRNA + 4 S-adenosyl-L-homocysteine + 4 H(+). Specifically dimethylates two adjacent adenosines (A1518 and A1519) in the loop of a conserved hairpin near the 3'-end of 16S rRNA in the 30S particle. May play a critical role in biogenesis of 30S subunits. The chain is Ribosomal RNA small subunit methyltransferase A from Crocosphaera subtropica (strain ATCC 51142 / BH68) (Cyanothece sp. (strain ATCC 51142)).